We begin with the raw amino-acid sequence, 453 residues long: Oocyte zinc finger protein XlCOF6 (453 aa).

14 consecutive C2H2-type zinc fingers follow at residues 6–29, 67–89, 95–117, 123–145, 151–173, 179–201, 207–229, 235–257, 263–285, 291–313, 319–341, 375–397, 403–425, and 431–453; these read FICS…CGKH, FTCT…HKTH, FTCM…YKAH, VRCT…KRLH, FACT…QRTH, FTCT…RRTH, FTCT…QITH, FTCT…QRTH, and FTCT…RITH.

This sequence belongs to the krueppel C2H2-type zinc-finger protein family.

It localises to the nucleus. Its function is as follows. May be involved in transcriptional regulation. This chain is Oocyte zinc finger protein XlCOF6, found in Xenopus laevis (African clawed frog).